A 282-amino-acid chain; its full sequence is Undecaprenyl-diphosphatase (282 aa).

The next 6 membrane-spanning stretches (helical) occupy residues 90–110 (YWLGWYVIIGTIPICILGLVC), 121–141 (LWVVATALVAFSGVIAFAEYV), 165–185 (LALIPGVSRSGSTISAGLFLG), 194–214 (FGFLLAIPAVFASGLFSIPDA), 228–248 (QLLVATVIAFVVGLVAVSWLL), and 256–276 (LYWFVGYRIVVGVGVLILLAV).

Belongs to the UppP family.

It localises to the cell membrane. It carries out the reaction di-trans,octa-cis-undecaprenyl diphosphate + H2O = di-trans,octa-cis-undecaprenyl phosphate + phosphate + H(+). Catalyzes the dephosphorylation of undecaprenyl diphosphate (UPP). Confers resistance to bacitracin. This chain is Undecaprenyl-diphosphatase, found in Mycobacterium leprae (strain Br4923).